We begin with the raw amino-acid sequence, 91 residues long: Signal recognition particle 19 kDa protein (91 aa).

The protein belongs to the SRP19 family. As to quaternary structure, part of the signal recognition particle protein translocation system, which is composed of SRP and FtsY. Archaeal SRP consists of a 7S RNA molecule of 300 nucleotides and two protein subunits: SRP54 and SRP19.

The protein resides in the cytoplasm. Its function is as follows. Involved in targeting and insertion of nascent membrane proteins into the cytoplasmic membrane. Binds directly to 7S RNA and mediates binding of the 54 kDa subunit of the SRP. The sequence is that of Signal recognition particle 19 kDa protein from Methanoregula boonei (strain DSM 21154 / JCM 14090 / 6A8).